We begin with the raw amino-acid sequence, 53 residues long: Sec-independent protein translocase protein TatA (53 aa).

Residues 1–21 (MGMSFSHLLIVLLIIFVLFGA) traverse the membrane as a helical segment.

This sequence belongs to the TatA/E family. The Tat system comprises two distinct complexes: a TatABC complex, containing multiple copies of TatA, TatB and TatC subunits, and a separate TatA complex, containing only TatA subunits. Substrates initially bind to the TatABC complex, which probably triggers association of the separate TatA complex to form the active translocon.

The protein localises to the cell inner membrane. Functionally, part of the twin-arginine translocation (Tat) system that transports large folded proteins containing a characteristic twin-arginine motif in their signal peptide across membranes. TatA could form the protein-conducting channel of the Tat system. This chain is Sec-independent protein translocase protein TatA, found in Rickettsia rickettsii (strain Iowa).